We begin with the raw amino-acid sequence, 505 residues long: Lysine--tRNA ligase (505 aa).

Residues Glu-415 and Glu-422 each coordinate Mg(2+).

Belongs to the class-II aminoacyl-tRNA synthetase family. As to quaternary structure, homodimer. It depends on Mg(2+) as a cofactor.

Its subcellular location is the cytoplasm. The enzyme catalyses tRNA(Lys) + L-lysine + ATP = L-lysyl-tRNA(Lys) + AMP + diphosphate. The chain is Lysine--tRNA ligase from Xanthomonas oryzae pv. oryzae (strain MAFF 311018).